The following is a 478-amino-acid chain: ATP synthase subunit beta (478 aa).

Gly-164–Thr-171 provides a ligand contact to ATP.

Belongs to the ATPase alpha/beta chains family. As to quaternary structure, F-type ATPases have 2 components, CF(1) - the catalytic core - and CF(0) - the membrane proton channel. CF(1) has five subunits: alpha(3), beta(3), gamma(1), delta(1), epsilon(1). CF(0) has three main subunits: a(1), b(2) and c(9-12). The alpha and beta chains form an alternating ring which encloses part of the gamma chain. CF(1) is attached to CF(0) by a central stalk formed by the gamma and epsilon chains, while a peripheral stalk is formed by the delta and b chains.

The protein localises to the cell membrane. It catalyses the reaction ATP + H2O + 4 H(+)(in) = ADP + phosphate + 5 H(+)(out). In terms of biological role, produces ATP from ADP in the presence of a proton gradient across the membrane. The catalytic sites are hosted primarily by the beta subunits. This chain is ATP synthase subunit beta, found in Streptomyces coelicolor (strain ATCC BAA-471 / A3(2) / M145).